Here is a 756-residue protein sequence, read N- to C-terminus: Receptor-like protein 3 (756 aa).

Residues methionine 1–alanine 50 form the signal peptide. The tract at residues leucine 51–isoleucine 88 is N-cap. The Extracellular portion of the chain corresponds to leucine 51–lysine 725. A glycan (N-linked (GlcNAc...) asparagine) is linked at asparagine 66. LRR repeat units follow at residues aspartate 95–leucine 119, histidine 120–alanine 143, aspartate 145–asparagine 169, cysteine 174–glutamine 199, threonine 201–serine 225, serine 226–cysteine 250, lysine 252–leucine 274, serine 275–leucine 298, threonine 299–leucine 322, serine 323–cysteine 346, asparagine 348–arginine 370, phenylalanine 371–cysteine 395, serine 397–leucine 419, glutamate 420–glutamine 443, cysteine 445–serine 471, phenylalanine 474–leucine 498, lysine 499–threonine 521, and phenylalanine 522–leucine 546. N-linked (GlcNAc...) asparagine glycosylation is found at asparagine 126 and asparagine 169. The N-linked (GlcNAc...) asparagine glycan is linked to asparagine 208. N-linked (GlcNAc...) asparagine glycosylation is found at asparagine 262 and asparagine 273. Asparagine 334 and asparagine 345 each carry an N-linked (GlcNAc...) asparagine glycan. The N-linked (GlcNAc...) asparagine glycan is linked to asparagine 381. 3 N-linked (GlcNAc...) asparagine glycosylation sites follow: asparagine 434, asparagine 447, and asparagine 459. The stretch at alanine 548–valine 569 is one LRR 19; degenerate repeat. LRR repeat units lie at residues serine 570 to arginine 593, leucine 608 to lysine 631, leucine 632 to leucine 656, and tyrosine 658 to threonine 681. Asparagine 573 is a glycosylation site (N-linked (GlcNAc...) asparagine). A glycan (N-linked (GlcNAc...) asparagine) is linked at asparagine 666. Residues leucine 699–lysine 725 are C-cap/acidic domain. The chain crosses the membrane as a helical span at residues phenylalanine 726–phenylalanine 746. Topologically, residues phenylalanine 747–lysine 756 are cytoplasmic.

It belongs to the RLP family. In terms of tissue distribution, expressed at very low levels in the shoot apex.

It is found in the cell membrane. Involved in the perception of CLV3 and CLV3-like peptides, that act as extracellular signals regulating meristems maintenance. Contributes, with WAKL22/RFO1, to resistance to F.oxysporum (f.) matthioli in cv. Columbia relative to cv. Ty-0. The chain is Receptor-like protein 3 from Arabidopsis thaliana (Mouse-ear cress).